The sequence spans 371 residues: Glycerol-3-phosphate dehydrogenase [NAD(+)] 2 (371 aa).

NAD(+) is bound by residues 18-23 (GSGNWG), Phe-50, and Phe-106. Lys-129 provides a ligand contact to substrate. Ala-162 provides a ligand contact to NAD(+). Residue Lys-222 is the Proton acceptor of the active site. 2 residues coordinate NAD(+): Arg-294 and Gln-323. Residue 294 to 295 (RN) participates in substrate binding.

The protein belongs to the NAD-dependent glycerol-3-phosphate dehydrogenase family. As to quaternary structure, interacts with human CFH/complement factor H; the interaction is direct and enables the pathogen to evade the host innate immune system. Interacts with human CFHR1/complement factor H-related protein 1; the interaction is direct. Interacts with human PLG/plasminogen; the interaction is direct and provides active plasmin on the surface of fungal cells.

It is found in the secreted. It localises to the cell wall. Its subcellular location is the cytoplasm. The protein resides in the peroxisome. It catalyses the reaction sn-glycerol 3-phosphate + NAD(+) = dihydroxyacetone phosphate + NADH + H(+). May catalyze the production and accumulation of glycerol during hyperosmotic stress conditions. Glycerol acts as a osmoregulator that prevents loss of water and turgor of the cells. Mediates evasion of the host innate immune system by binding inhibitory components of the host alternative complement system, in a manner dependent on estrogen-induced inhibition of EBP1. The sequence is that of Glycerol-3-phosphate dehydrogenase [NAD(+)] 2 from Candida albicans (strain SC5314 / ATCC MYA-2876) (Yeast).